The following is a 415-amino-acid chain: Fructose-like permease IIC component (415 aa).

Residues 1-46 are Cytoplasmic-facing; it reads MAIKKRSATVVPGASGAAAAVKNPQASKSSFWGELPQHVMSGISRM. The 376-residue stretch at 35 to 410 folds into the PTS EIIC type-2 domain; sequence LPQHVMSGIS…RLMMFRKGKL (376 aa). The helical transmembrane segment at 47–67 threads the bilayer; it reads VPTLIMGGVILAFSQLIAYSW. The Periplasmic portion of the chain corresponds to 68-101; sequence LKIPAEIGIMDALNSGKFSGFDLSLLKFAWLSQS. The helical transmembrane segment at 102–122 threads the bilayer; the sequence is FGGVLFGFAIPMFAAFVANSI. Residues 123-126 are Cytoplasmic-facing; the sequence is GGKL. Residues 127-147 form a helical membrane-spanning segment; it reads AFPAGFIGGLMSTQPTQLLNF. Residues 148-157 are Periplasmic-facing; sequence DPSTMQWATS. The helical transmembrane segment at 158–178 threads the bilayer; that stretch reads SPVPSTFIGALIISIVAGYLV. Residues 179 to 197 are Cytoplasmic-facing; it reads KWMNQKIQLPDFLLAFKTT. A helical transmembrane segment spans residues 198-218; that stretch reads FLLPILSAIFVMLAMYYVITP. Residues 219-237 are Periplasmic-facing; the sequence is FGGWINGGIRTVLTAAGEK. A helical transmembrane segment spans residues 238-258; that stretch reads GALMYAMGIAAATAIDLGGPI. At 259–276 the chain is on the cytoplasmic side; the sequence is NKAAGFVAFSFTTDHVLP. The helical transmembrane segment at 277 to 297 threads the bilayer; that stretch reads VTARSIAIVIPPIGLGLATII. Over 298-318 the chain is Periplasmic; that stretch reads DRRLTGKRLFNAQLYPQGKTA. Residues 319–339 traverse the membrane as a helical segment; the sequence is MFLAFMGISEGAIPFALESPI. Residues 340–341 lie on the Cytoplasmic side of the membrane; it reads TA. Residues 342–362 traverse the membrane as a helical segment; it reads IPSYMVGAIVGSTAAVWLGAV. The Periplasmic portion of the chain corresponds to 363 to 378; it reads QWFPESAIWAWPLVTN. The chain crosses the membrane as a helical span at residues 379–399; the sequence is LGVYMAGIALGAVITALMVVF. Topologically, residues 400–415 are cytoplasmic; that stretch reads LRLMMFRKGKLLIDSL.

The protein localises to the cell inner membrane. Its function is as follows. The phosphoenolpyruvate-dependent sugar phosphotransferase system (PTS), a major carbohydrate active -transport system, catalyzes the phosphorylation of incoming sugar substrates concomitant with their translocation across the cell membrane. This Escherichia coli O157:H7 protein is Fructose-like permease IIC component (fryC).